We begin with the raw amino-acid sequence, 166 residues long: Crossover junction endodeoxyribonuclease RuvC (166 aa).

Active-site residues include aspartate 7, glutamate 68, and aspartate 141. Mg(2+) is bound by residues aspartate 7, glutamate 68, and aspartate 141.

Belongs to the RuvC family. Homodimer which binds Holliday junction (HJ) DNA. The HJ becomes 2-fold symmetrical on binding to RuvC with unstacked arms; it has a different conformation from HJ DNA in complex with RuvA. In the full resolvosome a probable DNA-RuvA(4)-RuvB(12)-RuvC(2) complex forms which resolves the HJ. The cofactor is Mg(2+).

It localises to the cytoplasm. It carries out the reaction Endonucleolytic cleavage at a junction such as a reciprocal single-stranded crossover between two homologous DNA duplexes (Holliday junction).. The RuvA-RuvB-RuvC complex processes Holliday junction (HJ) DNA during genetic recombination and DNA repair. Endonuclease that resolves HJ intermediates. Cleaves cruciform DNA by making single-stranded nicks across the HJ at symmetrical positions within the homologous arms, yielding a 5'-phosphate and a 3'-hydroxyl group; requires a central core of homology in the junction. The consensus cleavage sequence is 5'-(A/T)TT(C/G)-3'. Cleavage occurs on the 3'-side of the TT dinucleotide at the point of strand exchange. HJ branch migration catalyzed by RuvA-RuvB allows RuvC to scan DNA until it finds its consensus sequence, where it cleaves and resolves the cruciform DNA. This is Crossover junction endodeoxyribonuclease RuvC from Koribacter versatilis (strain Ellin345).